The following is a 151-amino-acid chain: Transcriptional regulator MraZ (151 aa).

SpoVT-AbrB domains lie at 5–52 and 81–124; these read ANAI…PLDE and AVDL…DEDA.

Belongs to the MraZ family. As to quaternary structure, forms oligomers.

It localises to the cytoplasm. It is found in the nucleoid. The protein is Transcriptional regulator MraZ of Pseudomonas fluorescens (strain ATCC BAA-477 / NRRL B-23932 / Pf-5).